A 362-amino-acid polypeptide reads, in one-letter code: Leucoanthocyanidin dioxygenase (362 aa).

Positions 211–313 constitute a Fe2OG dioxygenase domain; that stretch reads MEELLLQKKI…RISWAVFCEP (103 aa). Fe cation contacts are provided by His-238, Asp-240, and His-294.

The protein belongs to the iron/ascorbate-dependent oxidoreductase family. The cofactor is Fe cation. Requires L-ascorbate as cofactor.

It catalyses the reaction a (2R,3S,4S)-leucoanthocyanidin + 2-oxoglutarate + O2 = a 4-H-anthocyanidin with a 3-hydroxy group + succinate + CO2 + 2 H2O. It functions in the pathway pigment biosynthesis; anthocyanin biosynthesis. Its function is as follows. Oxidation of leucoanthocyanidins into anthocyanidins. The sequence is that of Leucoanthocyanidin dioxygenase from Vitis vinifera (Grape).